A 120-amino-acid chain; its full sequence is Xibalbin-1 (120 aa).

Residues 1–21 form the signal peptide; sequence MISKILIAACALLLISHLVLA. Positions 22–63 are excised as a propeptide; that stretch reads VPYLEDGLNSLHNRTGESDETRGYTIQLLKEMPEDDAVEDYS. 4 cysteine pairs are disulfide-bonded: Cys-79/Cys-94, Cys-86/Cys-99, Cys-93/Cys-110, and Cys-101/Cys-108.

The protein belongs to the xibalbin-1 family. In terms of tissue distribution, expressed by the venom gland. Not found in the whole body.

It is found in the secreted. Functionally, probable neurotoxin. Strongly inhibits voltage-gated potassium channels (Kv1.1/KCNA1, Kv1.2/KCNA2, Kv1.3/KCNA3, and Kv1.6/KCNA6, with the highest toxicity against Kv1.6 (74% inhibition at 1 uM)) and mildly inhibits sodium channels (Nav1.2/SCN2A, Nav1.4/SCN4A, Nav1.5/SCN5A, Nav1.6/SCN8A, and BgNav). Induces activation of protein kinase A type II (PKA-II) and MAP kinase Erk1/2 in primary nociceptive and non-nociceptive sensory neurons. Does not show cytotoxic activity. Does not have an impact on Ca2+, cAMP, and NO signaling in the cell types analyzed. Does not interfere with the adhesion of leukocytes to endothelial cells. In Xibalbanus tulumensis (Blind cave remipede), this protein is Xibalbin-1.